The sequence spans 116 residues: MTNHRIDRVGMEIKREVNEILHKKVRDPRVQGVTITEVQMLGDLSVAKVYYTIMSDLASDNQKAEIGLKKATGTIKRELGKQLTMYKIPDLVFEKDNSIAYGNKIDQLLRELEKKQ.

The protein belongs to the RbfA family. Monomer. Binds 30S ribosomal subunits, but not 50S ribosomal subunits or 70S ribosomes.

The protein resides in the cytoplasm. Its function is as follows. One of several proteins that assist in the late maturation steps of the functional core of the 30S ribosomal subunit. Associates with free 30S ribosomal subunits (but not with 30S subunits that are part of 70S ribosomes or polysomes). Required for efficient processing of 16S rRNA. May interact with the 5'-terminal helix region of 16S rRNA. In Streptococcus equi subsp. zooepidemicus (strain H70), this protein is Ribosome-binding factor A.